A 204-amino-acid chain; its full sequence is MGAYKYMQELWRKKQSDVMRFLLRVRCWQYRQLSALHRAPRPTRPDKARRLGYKAKQGYVIYRIRVRRGGRKRPVPKGATYGKPVHHGVNQIKFARSLQSVAEERAGRHCGGLRVLSSYWVGEDSTYKFFEVVLIDTFHKAIRRDPDTQWITKAVHKHREMRGLTSAGKKSRGLGKGHKFHLTIGGSRRAAWKRRNTLQLHRYR.

Belongs to the eukaryotic ribosomal protein eL15 family. As to quaternary structure, component of the large ribosomal subunit.

The protein resides in the cytoplasm. Its function is as follows. Component of the large ribosomal subunit. The ribosome is a large ribonucleoprotein complex responsible for the synthesis of proteins in the cell. This is Large ribosomal subunit protein eL15 (rpl15) from Cyprinus carpio (Common carp).